A 59-amino-acid chain; its full sequence is Cuticle protein 7 isoform c (59 aa).

Gln1 bears the Pyrrolidone carboxylic acid mark.

This is Cuticle protein 7 isoform c from Limulus polyphemus (Atlantic horseshoe crab).